The sequence spans 348 residues: UDP-glucose 4-epimerase (348 aa).

NAD(+) contacts are provided by residues 12–14 (GYI), 33–37 (DNFHN), 66–67 (DI), Phe88, and Lys92. Residue 132 to 134 (SAT) coordinates substrate. Tyr157 acts as the Proton acceptor in catalysis. The NAD(+) site is built by Lys161 and Tyr185. Substrate is bound by residues 185–187 (YFN), 206–208 (NNL), 224–226 (NVF), Arg239, and 300–303 (REGD).

This sequence belongs to the NAD(P)-dependent epimerase/dehydratase family. Homodimer. NAD(+) serves as cofactor.

It catalyses the reaction UDP-alpha-D-glucose = UDP-alpha-D-galactose. The enzyme catalyses UDP-N-acetyl-alpha-D-glucosamine = UDP-N-acetyl-alpha-D-galactosamine. It participates in carbohydrate metabolism; galactose metabolism. Its function is as follows. Catalyzes two distinct but analogous reactions: the reversible epimerization of UDP-glucose to UDP-galactose and the reversible epimerization of UDP-N-acetylglucosamine to UDP-N-acetylgalactosamine. The reaction with UDP-Gal plays a critical role in the Leloir pathway of galactose catabolism in which galactose is converted to the glycolytic intermediate glucose 6-phosphate. It contributes to the catabolism of dietary galactose and enables the endogenous biosynthesis of both UDP-Gal and UDP-GalNAc when exogenous sources are limited. Both UDP-sugar interconversions are important in the synthesis of glycoproteins and glycolipids. This is UDP-glucose 4-epimerase from Homo sapiens (Human).